The sequence spans 175 residues: Peptide deformylase (175 aa).

Fe cation contacts are provided by Cys99 and His141. The active site involves Glu142. His145 contributes to the Fe cation binding site.

It belongs to the polypeptide deformylase family. Fe(2+) serves as cofactor.

It carries out the reaction N-terminal N-formyl-L-methionyl-[peptide] + H2O = N-terminal L-methionyl-[peptide] + formate. In terms of biological role, removes the formyl group from the N-terminal Met of newly synthesized proteins. Requires at least a dipeptide for an efficient rate of reaction. N-terminal L-methionine is a prerequisite for activity but the enzyme has broad specificity at other positions. This is Peptide deformylase from Rickettsia typhi (strain ATCC VR-144 / Wilmington).